The sequence spans 117 residues: Resistin-like gamma (117 aa).

The signal sequence occupies residues 1 to 29 (MLTFNKMKTTTCSLLICISLLQLMVPVNT). Intrachain disulfides connect Cys-61–Cys-114, Cys-73–Cys-113, Cys-82–Cys-99, Cys-84–Cys-101, and Cys-88–Cys-103.

The protein belongs to the resistin/FIZZ family. As to quaternary structure, homodimer. Heterodimer with RETNLB. Expressed in colon, lung, spleen, pancreas, ileum and bone marrow (at protein level). In colon, found throughout the crypt and surface epithelium, including goblet cells (at protein level). Highest expression is observed in bone marrow, spleen and lung, with lower levels in other tissues. Detected at low levels in granulocytes, but not found in monocytes or lymphocytes. Has very weak expression in white adipose tissue.

Its subcellular location is the secreted. Functionally, probable hormone. Promotes chemotaxis in myeloid cells. The protein is Resistin-like gamma of Mus musculus (Mouse).